The chain runs to 200 residues: MFAYFRGKLTSVLPEEVVVEVSGIAYQFLISAATHRQLPEQGSEVFLFSHLVVREDLLQLYGFSGEEERQLFRLLLLTTGVGPKLALALLSGLSVQDIHDAILTNTPERLYGITGVGKKTAARIILELRDKVLKLSPVSALASPARLSSTLLRDDAVNALVTLGFSRIIVQKAVVAILEQNPGLTVEEVIKAALVSIHNS.

A domain I region spans residues 1-64; it reads MFAYFRGKLT…EDLLQLYGFS (64 aa). The domain II stretch occupies residues 65 to 143; it reads GEEERQLFRL…KLSPVSALAS (79 aa). The interval 144-154 is flexible linker; it reads PARLSSTLLRD. The tract at residues 154–200 is domain III; that stretch reads DDAVNALVTLGFSRIIVQKAVVAILEQNPGLTVEEVIKAALVSIHNS.

Belongs to the RuvA family. As to quaternary structure, homotetramer. Forms an RuvA(8)-RuvB(12)-Holliday junction (HJ) complex. HJ DNA is sandwiched between 2 RuvA tetramers; dsDNA enters through RuvA and exits via RuvB. An RuvB hexamer assembles on each DNA strand where it exits the tetramer. Each RuvB hexamer is contacted by two RuvA subunits (via domain III) on 2 adjacent RuvB subunits; this complex drives branch migration. In the full resolvosome a probable DNA-RuvA(4)-RuvB(12)-RuvC(2) complex forms which resolves the HJ.

It localises to the cytoplasm. In terms of biological role, the RuvA-RuvB-RuvC complex processes Holliday junction (HJ) DNA during genetic recombination and DNA repair, while the RuvA-RuvB complex plays an important role in the rescue of blocked DNA replication forks via replication fork reversal (RFR). RuvA specifically binds to HJ cruciform DNA, conferring on it an open structure. The RuvB hexamer acts as an ATP-dependent pump, pulling dsDNA into and through the RuvAB complex. HJ branch migration allows RuvC to scan DNA until it finds its consensus sequence, where it cleaves and resolves the cruciform DNA. In Pelodictyon phaeoclathratiforme (strain DSM 5477 / BU-1), this protein is Holliday junction branch migration complex subunit RuvA.